We begin with the raw amino-acid sequence, 504 residues long: Glycerol kinase (504 aa).

Thr12 serves as a coordination point for ADP. ATP is bound by residues Thr12, Thr13, and Ser14. Thr12 contacts sn-glycerol 3-phosphate. Arg16 serves as a coordination point for ADP. Arg82, Glu83, Tyr134, and Asp246 together coordinate sn-glycerol 3-phosphate. Residues Arg82, Glu83, Tyr134, Asp246, and Gln247 each coordinate glycerol. Residues Thr268 and Gly312 each contribute to the ADP site. 4 residues coordinate ATP: Thr268, Gly312, Gln316, and Gly413. ADP is bound by residues Gly413 and Asn417.

The protein belongs to the FGGY kinase family.

The enzyme catalyses glycerol + ATP = sn-glycerol 3-phosphate + ADP + H(+). The protein operates within polyol metabolism; glycerol degradation via glycerol kinase pathway; sn-glycerol 3-phosphate from glycerol: step 1/1. Inhibited by fructose 1,6-bisphosphate (FBP). Functionally, key enzyme in the regulation of glycerol uptake and metabolism. Catalyzes the phosphorylation of glycerol to yield sn-glycerol 3-phosphate. The chain is Glycerol kinase from Paenarthrobacter aurescens (strain TC1).